The following is a 308-amino-acid chain: Cyclopropane mycolic acid synthase 2 (308 aa).

S-adenosyl-L-methionine is bound by residues 44–45 (YS), 79–87 (LLDIGCGWG), 105–110 (TLSANQ), and 137–138 (WE). Cys-290 is a catalytic residue.

It belongs to the CFA/CMAS family. As to quaternary structure, homodimer.

The protein resides in the cytoplasm. The catalysed reaction is a 1-acyl-2-(9Z)-enoyl-sn-glycero-3-phospholipid + S-adenosyl-L-methionine = a 1-acyl-2-(9-cyclopronane)-acyl-sn-glycero-3-phospholipid + S-adenosyl-L-homocysteine + H(+). The protein operates within lipid metabolism; mycolic acid biosynthesis. Functionally, catalyzes the formation of trans cyclopropanated ketomycolate or methoxymycolate through the conversion of a double bond to a cyclopropane ring at the proximal position of an oxygenated mycolic acid via the transfer of a methylene group from S-adenosyl-L-methionine. In the absence of MmaA2, CmaA2 has a non-specific cis-cyclopropanating activity and is able to catalyze the conversion of a double bond to a cis cyclopropane ring at the distal position of an alpha mycolic acid. Cyclopropanated mycolic acids are key factors participating in cell envelope permeability, host immunomodulation and persistence. The protein is Cyclopropane mycolic acid synthase 2 (cmaA2) of Mycobacterium leprae (strain TN).